The sequence spans 449 residues: Probable D-serine dehydratase (449 aa).

Position 119 is an N6-(pyridoxal phosphate)lysine (Lys-119).

The protein belongs to the serine/threonine dehydratase family. DsdA subfamily. Pyridoxal 5'-phosphate is required as a cofactor.

It carries out the reaction D-serine = pyruvate + NH4(+). In Pseudomonas putida (strain ATCC 700007 / DSM 6899 / JCM 31910 / BCRC 17059 / LMG 24140 / F1), this protein is Probable D-serine dehydratase.